Consider the following 408-residue polypeptide: Glutamate N-acetyltransferase (408 aa).

Residues T150, K176, T189, E271, N403, and T408 each contribute to the substrate site. T189 serves as the catalytic Nucleophile.

Belongs to the ArgJ family. In terms of assembly, heterotetramer of two alpha and two beta chains.

The protein localises to the cytoplasm. It catalyses the reaction N(2)-acetyl-L-ornithine + L-glutamate = N-acetyl-L-glutamate + L-ornithine. Its pathway is amino-acid biosynthesis; L-arginine biosynthesis; L-ornithine and N-acetyl-L-glutamate from L-glutamate and N(2)-acetyl-L-ornithine (cyclic): step 1/1. Its function is as follows. Catalyzes the transfer of the acetyl group from N(2)-acetylornithine to glutamate, forming N-acetylglutamate and L-ornithine. The polypeptide is Glutamate N-acetyltransferase (Methanococcus vannielii (strain ATCC 35089 / DSM 1224 / JCM 13029 / OCM 148 / SB)).